Here is a 186-residue protein sequence, read N- to C-terminus: Cell division protein ZapC (186 aa).

The protein belongs to the ZapC family. In terms of assembly, interacts directly with FtsZ.

It localises to the cytoplasm. In terms of biological role, contributes to the efficiency of the cell division process by stabilizing the polymeric form of the cell division protein FtsZ. Acts by promoting interactions between FtsZ protofilaments and suppressing the GTPase activity of FtsZ. This is Cell division protein ZapC from Musicola paradisiaca (strain Ech703) (Dickeya paradisiaca).